Reading from the N-terminus, the 848-residue chain is Neprilysin-11 (848 aa).

The Cytoplasmic segment spans residues methionine 1–lysine 74. Residues leucine 75–isoleucine 95 traverse the membrane as a helical; Signal-anchor for type II membrane protein segment. Residues asparagine 96–tryptophan 848 lie on the Extracellular side of the membrane. The interval histidine 108 to cysteine 161 is disordered. Positions valine 133–proline 144 are enriched in pro residues. The 689-residue stretch at valine 160–tryptophan 848 folds into the Peptidase M13 domain. Cysteine 161 and cysteine 166 form a disulfide bridge. N-linked (GlcNAc...) asparagine glycans are attached at residues asparagine 178, asparagine 249, asparagine 284, asparagine 312, asparagine 337, asparagine 364, asparagine 398, and asparagine 438. 4 disulfide bridges follow: cysteine 184–cysteine 833, cysteine 192–cysteine 793, cysteine 247–cysteine 509, and cysteine 719–cysteine 845. Histidine 682 is a Zn(2+) binding site. Glutamate 683 is an active-site residue. Residue histidine 686 participates in Zn(2+) binding. An N-linked (GlcNAc...) asparagine glycan is attached at asparagine 726. Zn(2+) is bound at residue glutamate 744. Aspartate 748 acts as the Proton donor in catalysis.

This sequence belongs to the peptidase M13 family. Zn(2+) serves as cofactor.

Its subcellular location is the cell membrane. Its function is as follows. Probable cell surface protease. In Caenorhabditis elegans, this protein is Neprilysin-11 (nep-11).